The following is a 427-amino-acid chain: MSTSFENKATNRGVITFTISQDKIKPALDKAFNKIKKDLNAPGFRKGHMPRPVFNQKFGEEVLYEDALNIVLPEAYEAAVTELGLDVVAQPKIDVVSMEKGKEWTLSAEVVTKPEVKLGDYKNLVVEVDASKEVSDEDVDAKIERERQNLAELIIKDGEAAQGDTVVIDFVGSVDGVEFDAGKGDNFSLELGSGQFIPGFEDQLVGAKAGDEVEVNVTFPESYQAEDLAGKAAKFMTTIHEVKTKEVPELDDELAKDIDEDVDTLEDLKVKYRKELEAAQETSYDDAVEGAAIELAVANAEIVDLPEEMIHEEVNRSVNEFMGNMQRQGISPEMYFQLTGTTQEDLHNPYSAEADKRVKTNLVIEAIAKAEGFEATDSEIEQEINDLATEYNMPADQVRSLLSADMLKHDIAMKKAVEVITSTASVK.

One can recognise a PPIase FKBP-type domain in the interval 163-248; it reads GDTVVIDFVG…IHEVKTKEVP (86 aa).

This sequence belongs to the FKBP-type PPIase family. Tig subfamily.

Its subcellular location is the cytoplasm. It catalyses the reaction [protein]-peptidylproline (omega=180) = [protein]-peptidylproline (omega=0). In terms of biological role, involved in protein export. Acts as a chaperone by maintaining the newly synthesized protein in an open conformation. Functions as a peptidyl-prolyl cis-trans isomerase. In Streptococcus pyogenes serotype M49 (strain NZ131), this protein is Trigger factor.